Here is an 849-residue protein sequence, read N- to C-terminus: Putative endoplasmic reticulum mannosidase MNL2 (849 aa).

Residues 1–12 (MSIARLVYSLFR) are Cytoplasmic-facing. Residues 13–32 (RVRSVLLLFITISLLFYYTF) form a helical; Signal-anchor for type II membrane protein membrane-spanning segment. The Lumenal segment spans residues 33 to 849 (QNEIDILNSY…TQGGHIIKKK (817 aa)). The N-linked (GlcNAc...) asparagine glycan is linked to Asn-45. The disordered stretch occupies residues 56-79 (HNTEGSSKLDPPDLSSTGSDRIAT). Cys-559 and Cys-598 are oxidised to a cystine.

Belongs to the glycosyl hydrolase 47 family. Ca(2+) serves as cofactor.

The protein resides in the endoplasmic reticulum membrane. It functions in the pathway protein modification; protein glycosylation. In terms of biological role, putative mannosidase involved in glycoprotein quality control since it is involved in the targeting of misfolded glycoproteins for ER-associated protein degradation (ERAD). This Saccharomyces cerevisiae (strain ATCC 204508 / S288c) (Baker's yeast) protein is Putative endoplasmic reticulum mannosidase MNL2 (MNL2).